We begin with the raw amino-acid sequence, 436 residues long: ATP-dependent protease ATPase subunit HslU (436 aa).

ATP-binding positions include isoleucine 18, 60-65, aspartate 249, glutamate 314, and arginine 386; that span reads GVGKTE.

The protein belongs to the ClpX chaperone family. HslU subfamily. In terms of assembly, a double ring-shaped homohexamer of HslV is capped on each side by a ring-shaped HslU homohexamer. The assembly of the HslU/HslV complex is dependent on binding of ATP.

The protein localises to the cytoplasm. ATPase subunit of a proteasome-like degradation complex; this subunit has chaperone activity. The binding of ATP and its subsequent hydrolysis by HslU are essential for unfolding of protein substrates subsequently hydrolyzed by HslV. HslU recognizes the N-terminal part of its protein substrates and unfolds these before they are guided to HslV for hydrolysis. This Chelativorans sp. (strain BNC1) protein is ATP-dependent protease ATPase subunit HslU.